The following is a 516-amino-acid chain: MVIARGLLRSNASSSSSQAINLLKYVTSTGSLQGHTQNLCDASTRHFSSVPSPQSNSTEENGFKGHGMLAPFTAGWQSTDVHPLVIERSEGSYVYDIDGKKYLDSLAGLWCTALGGSEPRLAKAATEQLHKLPFYHSFWNRTTKPSLDLAKELLSMFTAREMGKVFFTNSGSEANDSQVKLVWYYNNALGRPDKKKFIARSKSYHGSTLISASLSGLPALHQKFDLPAPFVLHTDCPHYWRFHLPGETEEEFATRLANNLEELILKEGPETIAAFIAEPVMGAGGVIPPPKTYFEKVQAIVKKYDILFIADEVITAFGRLGTMFGSDMYNIKPDLVSMAKALSSAYVPIGAIMVSPEISDVIHSQSNKLGSFAHGFTYSGHPVACAVAIEALKIYQERNIPDHVKQISPRFQEGVKAFAGSPIVGEIRGVGLILGTEFADNKSPNDPFPAEWGVGAIFGAECQKRGMLVRVAGDNIMMSPPLIMTPDEVEELVSIYGDALKATEERVAELKSKKNN.

The transit peptide at 1–47 directs the protein to the mitochondrion; the sequence is MVIARGLLRSNASSSSSQAINLLKYVTSTGSLQGHTQNLCDASTRHF. Polar residues predominate over residues 45–60; the sequence is RHFSSVPSPQSNSTEE. The tract at residues 45 to 64 is disordered; that stretch reads RHFSSVPSPQSNSTEENGFK. Pyridoxal 5'-phosphate is bound at residue 171–172; it reads GS. Tyr-204 contacts substrate. Asp-311 contacts pyridoxal 5'-phosphate. Lys-340 contacts substrate. Residue Lys-340 is modified to N6-(pyridoxal phosphate)lysine.

It belongs to the class-III pyridoxal-phosphate-dependent aminotransferase family.

The protein localises to the mitochondrion. It carries out the reaction 4-aminobutanoate + pyruvate = succinate semialdehyde + L-alanine. It catalyses the reaction 4-aminobutanoate + glyoxylate = succinate semialdehyde + glycine. Its function is as follows. Transaminase that degrades gamma-amino butyric acid (GABA) and uses pyruvate as amino-group acceptor, but not 2-oxoglutarate. This is Gamma-aminobutyrate transaminase 1, mitochondrial from Oryza sativa subsp. indica (Rice).